A 337-amino-acid chain; its full sequence is Nicotinate-nucleotide--dimethylbenzimidazole phosphoribosyltransferase (337 aa).

Glutamate 305 (proton acceptor) is an active-site residue.

Belongs to the CobT family.

It catalyses the reaction 5,6-dimethylbenzimidazole + nicotinate beta-D-ribonucleotide = alpha-ribazole 5'-phosphate + nicotinate + H(+). Its pathway is nucleoside biosynthesis; alpha-ribazole biosynthesis; alpha-ribazole from 5,6-dimethylbenzimidazole: step 1/2. Its function is as follows. Catalyzes the synthesis of alpha-ribazole-5'-phosphate from nicotinate mononucleotide (NAMN) and 5,6-dimethylbenzimidazole (DMB). The protein is Nicotinate-nucleotide--dimethylbenzimidazole phosphoribosyltransferase of Jannaschia sp. (strain CCS1).